The following is a 231-amino-acid chain: 5'-methylthioadenosine/S-adenosylhomocysteine nucleosidase (231 aa).

Glu-12 functions as the Proton acceptor in the catalytic mechanism. Residues Gly-78, Val-153, and 174–175 (ME) each bind substrate. Asp-198 acts as the Proton donor in catalysis.

Belongs to the PNP/UDP phosphorylase family. MtnN subfamily.

The enzyme catalyses S-adenosyl-L-homocysteine + H2O = S-(5-deoxy-D-ribos-5-yl)-L-homocysteine + adenine. The catalysed reaction is S-methyl-5'-thioadenosine + H2O = 5-(methylsulfanyl)-D-ribose + adenine. It catalyses the reaction 5'-deoxyadenosine + H2O = 5-deoxy-D-ribose + adenine. Its pathway is amino-acid biosynthesis; L-methionine biosynthesis via salvage pathway; S-methyl-5-thio-alpha-D-ribose 1-phosphate from S-methyl-5'-thioadenosine (hydrolase route): step 1/2. Catalyzes the irreversible cleavage of the glycosidic bond in both 5'-methylthioadenosine (MTA) and S-adenosylhomocysteine (SAH/AdoHcy) to adenine and the corresponding thioribose, 5'-methylthioribose and S-ribosylhomocysteine, respectively. Also cleaves 5'-deoxyadenosine, a toxic by-product of radical S-adenosylmethionine (SAM) enzymes, into 5-deoxyribose and adenine. This chain is 5'-methylthioadenosine/S-adenosylhomocysteine nucleosidase, found in Vibrio vulnificus (strain CMCP6).